The following is a 285-amino-acid chain: Bifunctional protein FolD (285 aa).

NADP(+) is bound by residues glycine 165–serine 167 and serine 190.

It belongs to the tetrahydrofolate dehydrogenase/cyclohydrolase family. In terms of assembly, homodimer.

It carries out the reaction (6R)-5,10-methylene-5,6,7,8-tetrahydrofolate + NADP(+) = (6R)-5,10-methenyltetrahydrofolate + NADPH. The catalysed reaction is (6R)-5,10-methenyltetrahydrofolate + H2O = (6R)-10-formyltetrahydrofolate + H(+). The protein operates within one-carbon metabolism; tetrahydrofolate interconversion. Its function is as follows. Catalyzes the oxidation of 5,10-methylenetetrahydrofolate to 5,10-methenyltetrahydrofolate and then the hydrolysis of 5,10-methenyltetrahydrofolate to 10-formyltetrahydrofolate. The sequence is that of Bifunctional protein FolD from Staphylococcus carnosus (strain TM300).